Reading from the N-terminus, the 52-residue chain is Rubredoxin (52 aa).

Residues methionine 1–isoleucine 52 form the Rubredoxin-like domain. Fe cation is bound by residues cysteine 6, cysteine 9, cysteine 39, and cysteine 42.

It belongs to the rubredoxin family. The cofactor is Fe(3+).

Its function is as follows. Rubredoxin is a small nonheme, iron protein lacking acid-labile sulfide. Its single Fe, chelated to 4 Cys, functions as an electron acceptor and may also stabilize the conformation of the molecule. This Thermoanaerobacterium thermosaccharolyticum (strain ATCC 7956 / DSM 571 / NCIMB 9385 / NCA 3814 / NCTC 13789 / WDCM 00135 / 2032) (Clostridium thermosaccharolyticum) protein is Rubredoxin.